The sequence spans 767 residues: Photosystem I P700 chlorophyll a apoprotein A1 (767 aa).

Transmembrane regions (helical) follow at residues 72 to 95 (IFSA…FHGA), 158 to 181 (LMAL…FHYH), 197 to 221 (LNHH…HVSA), 305 to 323 (IAHH…GHMY), 364 to 387 (WHAQ…QHMY), 403 to 429 (IGLF…IAMV), 451 to 473 (AIIS…LYIH), and 548 to 566 (FMVH…LILL). Positions 590 and 599 each coordinate [4Fe-4S] cluster. 2 helical membrane-spanning segments follow: residues 606-627 (HVFL…HFSW) and 681-703 (TAAY…MFLF). A chlorophyll a'-binding site is contributed by H692. Residues M700 and Y708 each coordinate chlorophyll a. Phylloquinone is bound at residue W709. The helical transmembrane segment at 741–761 (AVGVAHYLLGGIATTWAFFHA) threads the bilayer.

Belongs to the PsaA/PsaB family. As to quaternary structure, the PsaA/B heterodimer binds the P700 chlorophyll special pair and subsequent electron acceptors. PSI consists of a core antenna complex that captures photons, and an electron transfer chain that converts photonic excitation into a charge separation. The cyanobacterial PSI reaction center is composed of one copy each of PsaA,B,C,D,E,F,I,J,K,L,M and X, and forms trimeric complexes. PSI electron transfer chain: 5 chlorophyll a, 1 chlorophyll a', 2 phylloquinones and 3 4Fe-4S clusters. PSI core antenna: 90 chlorophyll a, 22 carotenoids, 3 phospholipids and 1 galactolipid. P700 is a chlorophyll a/chlorophyll a' dimer, A0 is one or more chlorophyll a, A1 is one or both phylloquinones and FX is a shared 4Fe-4S iron-sulfur center. is required as a cofactor.

It localises to the cellular thylakoid membrane. The catalysed reaction is reduced [plastocyanin] + hnu + oxidized [2Fe-2S]-[ferredoxin] = oxidized [plastocyanin] + reduced [2Fe-2S]-[ferredoxin]. In terms of biological role, psaA and PsaB bind P700, the primary electron donor of photosystem I (PSI), as well as the electron acceptors A0, A1 and FX. PSI is a plastocyanin/cytochrome c6-ferredoxin oxidoreductase, converting photonic excitation into a charge separation, which transfers an electron from the donor P700 chlorophyll pair to the spectroscopically characterized acceptors A0, A1, FX, FA and FB in turn. Oxidized P700 is reduced on the lumenal side of the thylakoid membrane by plastocyanin or cytochrome c6. The polypeptide is Photosystem I P700 chlorophyll a apoprotein A1 (Synechococcus sp. (strain CC9605)).